Reading from the N-terminus, the 301-residue chain is Alpha-ketoglutarate-dependent sulfate ester dioxygenase (301 aa).

His81 contacts substrate. Positions 108 and 110 each coordinate Fe cation. Val111 lines the substrate pocket. Thr135 contributes to the 2-oxoglutarate binding site. His264 is a Fe cation binding site. 2-oxoglutarate contacts are provided by Arg275 and Arg279.

The protein belongs to the TfdA dioxygenase family. As to quaternary structure, homotetramer. The cofactor is Fe(2+).

The catalysed reaction is a primary linear alkyl sulfate ester + 2-oxoglutarate + O2 = an aldehyde + sulfate + succinate + CO2 + H(+). It catalyses the reaction 2-ethylhexyl sulfate + 2-oxoglutarate + O2 = 2-ethylhexanal + sulfate + succinate + CO2 + H(+). The enzyme catalyses decyl sulfate + 2-oxoglutarate + O2 = decanal + sulfate + succinate + CO2 + H(+). It carries out the reaction hexyl sulfate + 2-oxoglutarate + O2 = hexanal + sulfate + succinate + CO2 + H(+). The catalysed reaction is nonyl sufate + 2-oxoglutarate + O2 = nonanal + sulfate + succinate + CO2 + H(+). Its activity is regulated as follows. Strongly stimulated by ascorbate. Catalyzes the oxygenolytic cleavage of 2-ethylhexyl sulfate (2-EHS) in the presence of alpha-ketoglutarate to yield 2-ethyl-hexanal and succinate, the decarboxylated form of alpha-ketoglutarate. It can accept a wide range of alpha-keto acids including 2-oxo-valerate, 2-oxo-adipate, 2-oxo-octanoate, 3-methyl-2-oxo-butyrate, oxaloacetate-alpha-ketoadipate, and alpha-ketooctanoate. It can catalyze the cleavage of medium-chain alkyl sulfate esters such as butylsulfate, pentylsulfate, hexylsulfate, heptylsulfate, octylsulfate, nonylsulfate, decylsulfate and sodium dodecyl sulfate (SDS). The sequence is that of Alpha-ketoglutarate-dependent sulfate ester dioxygenase from Pseudomonas putida (Arthrobacter siderocapsulatus).